A 219-amino-acid polypeptide reads, in one-letter code: Large ribosomal subunit protein uL3 (219 aa).

Residues 136–156 (GASHGAHRNHRKPGSIGGCAT) are disordered.

It belongs to the universal ribosomal protein uL3 family. Part of the 50S ribosomal subunit. Forms a cluster with proteins L14 and L19.

Its function is as follows. One of the primary rRNA binding proteins, it binds directly near the 3'-end of the 23S rRNA, where it nucleates assembly of the 50S subunit. This chain is Large ribosomal subunit protein uL3, found in Kineococcus radiotolerans (strain ATCC BAA-149 / DSM 14245 / SRS30216).